The sequence spans 353 residues: Holliday junction branch migration complex subunit RuvB (353 aa).

The segment at 4–190 is large ATPase domain (RuvB-L); it reads HYIRFKIMTN…FGIPMRLNFY (187 aa). ATP is bound by residues isoleucine 29, arginine 30, glycine 71, lysine 74, threonine 75, threonine 76, 137 to 139, arginine 180, tyrosine 190, and arginine 227; that span reads EDF. Threonine 75 contacts Mg(2+). The segment at 191–261 is small ATPAse domain (RuvB-S); sequence NTEELKKVLN…ISDFGLNRLE (71 aa). The interval 264-353 is head domain (RuvB-H); that stretch reads RIGLDSNDYR…HQFNIFNEHE (90 aa). DNA-binding residues include arginine 300, arginine 319, and arginine 324.

This sequence belongs to the RuvB family. Homohexamer. Forms an RuvA(8)-RuvB(12)-Holliday junction (HJ) complex. HJ DNA is sandwiched between 2 RuvA tetramers; dsDNA enters through RuvA and exits via RuvB. An RuvB hexamer assembles on each DNA strand where it exits the tetramer. Each RuvB hexamer is contacted by two RuvA subunits (via domain III) on 2 adjacent RuvB subunits; this complex drives branch migration. In the full resolvosome a probable DNA-RuvA(4)-RuvB(12)-RuvC(2) complex forms which resolves the HJ.

Its subcellular location is the cytoplasm. The enzyme catalyses ATP + H2O = ADP + phosphate + H(+). Functionally, the RuvA-RuvB-RuvC complex processes Holliday junction (HJ) DNA during genetic recombination and DNA repair, while the RuvA-RuvB complex plays an important role in the rescue of blocked DNA replication forks via replication fork reversal (RFR). RuvA specifically binds to HJ cruciform DNA, conferring on it an open structure. The RuvB hexamer acts as an ATP-dependent pump, pulling dsDNA into and through the RuvAB complex. RuvB forms 2 homohexamers on either side of HJ DNA bound by 1 or 2 RuvA tetramers; 4 subunits per hexamer contact DNA at a time. Coordinated motions by a converter formed by DNA-disengaged RuvB subunits stimulates ATP hydrolysis and nucleotide exchange. Immobilization of the converter enables RuvB to convert the ATP-contained energy into a lever motion, pulling 2 nucleotides of DNA out of the RuvA tetramer per ATP hydrolyzed, thus driving DNA branch migration. The RuvB motors rotate together with the DNA substrate, which together with the progressing nucleotide cycle form the mechanistic basis for DNA recombination by continuous HJ branch migration. Branch migration allows RuvC to scan DNA until it finds its consensus sequence, where it cleaves and resolves cruciform DNA. This Rickettsia massiliae (strain Mtu5) protein is Holliday junction branch migration complex subunit RuvB.